The sequence spans 296 residues: 110 kDa antigen (296 aa).

Residues 132–143 (EETQKTVEPEQI) form a 1; approximate repeat. Residues 132-296 (EETQKTVEPE…TQETQNTVEP (165 aa)) form a 13.5 X 12 AA approximate tandem repeats of E-E-T-Q-K-T-V-E-P-E-Q-T region. The disordered stretch occupies residues 133-296 (ETQKTVEPEQ…TQETQNTVEP (164 aa)). Residues 144-155 (EETQNTVEPEQT) form a 2; approximate repeat. Residues 156-167 (EETQKTVEPEQT) form repeat 3. The 4; approximate repeat unit spans residues 168–179 (EETQNTVEPEQI). Copy 5 of the repeat occupies 180–191 (EETQKTVEPEQT). Basic and acidic residues predominate over residues 181–271 (ETQKTVEPEQ…QTEETQKTVE (91 aa)). The 6; approximate repeat unit spans residues 192–203 (EEAQKTVEPEQT). Repeat copies occupy residues 204 to 215 (EETQKTVEPEQT), 216 to 227 (EETQKTVEPEQT), 228 to 239 (EETQKTVEPEQT), 240 to 251 (EETQKTVEPEQT), 252 to 263 (EETQKTVEPEQT), and 264 to 275 (EETQKTVEPEQT). Residues 276 to 287 (EETQNTVEPEPT) form a 13; approximate repeat. The segment covering 277–296 (ETQNTVEPEPTQETQNTVEP) has biased composition (polar residues). The stretch at 288–293 (QETQNT) is one 14; truncated repeat.

This Plasmodium knowlesi protein is 110 kDa antigen.